Reading from the N-terminus, the 207-residue chain is Proteasome subunit beta 2 (207 aa).

A propeptide spans 1–10 (removed in mature form; by autocatalysis); that stretch reads MLQLTEKFKG. Threonine 11 (nucleophile) is an active-site residue.

This sequence belongs to the peptidase T1B family. As to quaternary structure, the 20S proteasome core is composed of 14 alpha and 14 beta subunits that assemble into four stacked heptameric rings, resulting in a barrel-shaped structure. The two inner rings, each composed of seven catalytic beta subunits, are sandwiched by two outer rings, each composed of seven alpha subunits. The catalytic chamber with the active sites is on the inside of the barrel. Has a gated structure, the ends of the cylinder being occluded by the N-termini of the alpha-subunits. Is capped at one or both ends by the proteasome regulatory ATPase, PAN.

Its subcellular location is the cytoplasm. The enzyme catalyses Cleavage of peptide bonds with very broad specificity.. The formation of the proteasomal ATPase PAN-20S proteasome complex, via the docking of the C-termini of PAN into the intersubunit pockets in the alpha-rings, triggers opening of the gate for substrate entry. Interconversion between the open-gate and close-gate conformations leads to a dynamic regulation of the 20S proteasome proteolysis activity. Its function is as follows. Component of the proteasome core, a large protease complex with broad specificity involved in protein degradation. The protein is Proteasome subunit beta 2 of Pyrococcus abyssi (strain GE5 / Orsay).